The sequence spans 144 residues: Large ribosomal subunit protein uL16 (144 aa).

The protein belongs to the universal ribosomal protein uL16 family. Part of the 50S ribosomal subunit.

Binds 23S rRNA and is also seen to make contacts with the A and possibly P site tRNAs. This is Large ribosomal subunit protein uL16 from Bacillus anthracis (strain A0248).